Here is an 803-residue protein sequence, read N- to C-terminus: Protein translocase subunit SecA (803 aa).

Residues Gln-100, 118-122, and Asp-508 contribute to the ATP site; that span reads GEGKT.

This sequence belongs to the SecA family. In terms of assembly, monomer and homodimer. Part of the essential Sec protein translocation apparatus which comprises SecA, SecYEG and auxiliary proteins SecDF. Other proteins may also be involved.

The protein resides in the cell membrane. Its subcellular location is the cytoplasm. It carries out the reaction ATP + H2O + cellular proteinSide 1 = ADP + phosphate + cellular proteinSide 2.. Functionally, part of the Sec protein translocase complex. Interacts with the SecYEG preprotein conducting channel. Has a central role in coupling the hydrolysis of ATP to the transfer of proteins into and across the cell membrane, serving as an ATP-driven molecular motor driving the stepwise translocation of polypeptide chains across the membrane. This is Protein translocase subunit SecA from Leuconostoc mesenteroides subsp. mesenteroides (strain ATCC 8293 / DSM 20343 / BCRC 11652 / CCM 1803 / JCM 6124 / NCDO 523 / NBRC 100496 / NCIMB 8023 / NCTC 12954 / NRRL B-1118 / 37Y).